We begin with the raw amino-acid sequence, 146 residues long: UPF0178 protein BT9727_2823 (146 aa).

Belongs to the UPF0178 family.

The protein is UPF0178 protein BT9727_2823 of Bacillus thuringiensis subsp. konkukian (strain 97-27).